Here is a 418-residue protein sequence, read N- to C-terminus: Triacylglycerol lipase 2 (418 aa).

The N-terminal stretch at 1-31 (MAGSVMVPSVSIGLALSVLIFFALSLKTLEA) is a signal peptide. Asn-158 is a glycosylation site (N-linked (GlcNAc...) asparagine). The Nucleophile role is filled by Ser-190. Asn-286 and Asn-342 each carry an N-linked (GlcNAc...) asparagine glycan. Catalysis depends on charge relay system residues Asp-360 and His-393.

It belongs to the AB hydrolase superfamily. Lipase family.

Its subcellular location is the secreted. The catalysed reaction is a triacylglycerol + H2O = a diacylglycerol + a fatty acid + H(+). In terms of biological role, triacylglycerol (TAG) lipase. May be involved for TAG storage breakdown during seed germination. In Arabidopsis thaliana (Mouse-ear cress), this protein is Triacylglycerol lipase 2 (LIP2).